Consider the following 480-residue polypeptide: F-box/LRR-repeat protein 14 (480 aa).

Residues 11–58 (DRQMDELPDHLVWDILSKLHTTDDRNSLSLSCKRFFSLDNEQRYSLRI) enclose the F-box domain. LRR repeat units follow at residues 61-86 (GLVP…EIIY), 94-119 (GKQV…TLSF), 120-144 (CTFI…KLNF), 145-170 (APRI…HLIR), 171-196 (CLNV…CIKN), 197-222 (CRAI…QFEV), 229-257 (MKVY…SLGN), 258-283 (CIIA…HLDM), 284-309 (CTGV…SLRV), 322-347 (TLRL…KISF), 355-379 (LFSF…SLDH), 380-404 (VCVF…ELVH), 405-429 (CQEV…KLSK), 430-454 (CLGV…VVED), and 455-480 (CPQV…SWMY).

The sequence is that of F-box/LRR-repeat protein 14 (FBL14) from Arabidopsis thaliana (Mouse-ear cress).